The primary structure comprises 685 residues: Tyrosinase (685 aa).

Ser2 bears the N-acetylserine mark. Cu cation is bound by residues His67, His97, His106, His278, His282, and His307. Positions 95 to 97 form a cross-link, 2'-(S-cysteinyl)-histidine (Cys-His); it reads CTH. A propeptide spans 409–685 (could be involved in enzyme activation); that stretch reads ANFVENVADR…PCGHGPEDHI (277 aa).

This sequence belongs to the tyrosinase family. Cu(2+) is required as a cofactor.

It catalyses the reaction 2 L-dopa + O2 = 2 L-dopaquinone + 2 H2O. The enzyme catalyses L-tyrosine + O2 = L-dopaquinone + H2O. In terms of biological role, this is a copper-containing oxidase that functions in the formation of pigments such as melanins and other polyphenolic compounds. This Neurospora crassa (strain ATCC 24698 / 74-OR23-1A / CBS 708.71 / DSM 1257 / FGSC 987) protein is Tyrosinase (T).